A 166-amino-acid polypeptide reads, in one-letter code: UBA-like domain-containing protein 2-A (166 aa).

Residues 120 to 166 (QQPVWLPPASPTTHLHHHHHHPQPVWPPNSQPTGGPQKAMAAMDGQR) form a disordered region.

Belongs to the UBALD family.

This chain is UBA-like domain-containing protein 2-A (ubald2-a), found in Xenopus laevis (African clawed frog).